The primary structure comprises 602 residues: Probable translation initiation factor IF-2 (602 aa).

Residues 18–233 (LRTPIVCVMG…LVGLAQRFLK (216 aa)) enclose the tr-type G domain. A G1 region spans residues 27-34 (GHVDHGKT). 27–34 (GHVDHGKT) serves as a coordination point for GTP. The tract at residues 52 to 56 (AITQH) is G2. The tract at residues 88 to 91 (DTPG) is G3. Residues 88 to 92 (DTPGH) and 142 to 145 (NKID) contribute to the GTP site. The segment at 142–145 (NKID) is G4. The G5 stretch occupies residues 210–212 (SAI).

The protein belongs to the TRAFAC class translation factor GTPase superfamily. Classic translation factor GTPase family. IF-2 subfamily.

Function in general translation initiation by promoting the binding of the formylmethionine-tRNA to ribosomes. Seems to function along with eIF-2. The polypeptide is Probable translation initiation factor IF-2 (Methanothrix thermoacetophila (strain DSM 6194 / JCM 14653 / NBRC 101360 / PT) (Methanosaeta thermophila)).